The sequence spans 180 residues: Cell division protein ZapC (180 aa).

The protein belongs to the ZapC family. Interacts directly with FtsZ.

It localises to the cytoplasm. In terms of biological role, contributes to the efficiency of the cell division process by stabilizing the polymeric form of the cell division protein FtsZ. Acts by promoting interactions between FtsZ protofilaments and suppressing the GTPase activity of FtsZ. In Vibrio cholerae serotype O1 (strain ATCC 39315 / El Tor Inaba N16961), this protein is Cell division protein ZapC.